The primary structure comprises 200 residues: Adenylyl-sulfate kinase (200 aa).

An ATP-binding site is contributed by 36–43 (GLSGSGKS). Ser110 (phosphoserine intermediate) is an active-site residue.

This sequence belongs to the APS kinase family.

The enzyme catalyses adenosine 5'-phosphosulfate + ATP = 3'-phosphoadenylyl sulfate + ADP + H(+). It participates in sulfur metabolism; hydrogen sulfide biosynthesis; sulfite from sulfate: step 2/3. Its function is as follows. Catalyzes the synthesis of activated sulfate. The chain is Adenylyl-sulfate kinase from Clostridium acetobutylicum (strain ATCC 824 / DSM 792 / JCM 1419 / IAM 19013 / LMG 5710 / NBRC 13948 / NRRL B-527 / VKM B-1787 / 2291 / W).